A 109-amino-acid polypeptide reads, in one-letter code: Fluoride-specific ion channel FluC 1 (109 aa).

Transmembrane regions (helical) follow at residues 1–21, 29–49, 55–75, and 87–107; these read MVIV…YFFS, LPLG…VFYN, EVYA…STLN, and VFYS…FLGI. Residues glycine 66 and threonine 69 each contribute to the Na(+) site.

It belongs to the fluoride channel Fluc/FEX (TC 1.A.43) family.

It localises to the cell membrane. It catalyses the reaction fluoride(in) = fluoride(out). Its activity is regulated as follows. Na(+) is not transported, but it plays an essential structural role and its presence is essential for fluoride channel function. In terms of biological role, fluoride-specific ion channel. Important for reducing fluoride concentration in the cell, thus reducing its toxicity. This is Fluoride-specific ion channel FluC 1 from Streptococcus pneumoniae (strain ATCC BAA-255 / R6).